The chain runs to 141 residues: MLTEDDKQLIQHVWETVLEHQEDFGAEALERMFTVYPSTKTYFPHFDLHHGSEQIRHHGKKVVGALGDAVRHIDDLSATLSELSNLHAYNLRVDPVNFKLLSHCFQVVLGAHLGREYTPQVQVAYDKFLAAVSAVLAEKYR.

Residues 1-141 form the Globin domain; the sequence is MLTEDDKQLI…VSAVLAEKYR (141 aa). 2 residues coordinate heme b: histidine 58 and histidine 87.

It belongs to the globin family. In terms of assembly, heterotetramer of two alpha-D chains and two beta chains. In terms of tissue distribution, red blood cells.

Involved in oxygen transport from the lung to the various peripheral tissues. The chain is Hemoglobin subunit alpha-D (HBAD) from Chelonoidis niger (Galapagos giant tortoise).